Consider the following 93-residue polypeptide: Small ribosomal subunit protein uS19 (93 aa).

The protein belongs to the universal ribosomal protein uS19 family.

In terms of biological role, protein S19 forms a complex with S13 that binds strongly to the 16S ribosomal RNA. The polypeptide is Small ribosomal subunit protein uS19 (Mycobacterium tuberculosis (strain ATCC 25177 / H37Ra)).